Consider the following 459-residue polypeptide: Probable 3-ketoacyl-CoA synthase 14 (459 aa).

The N-terminal stretch at 1 to 25 (MFIAMADFKLLLLILILLSLFELDL) is a signal peptide. Residues 32–52 (FFSPFPVKIGLLLISIFFYAY) traverse the membrane as a helical segment. The FAE domain occupies 52–334 (YSTTRSKPVY…FILFLVKSKL (283 aa)). Residues histidine 268, histidine 352, histidine 356, histidine 385, and asparagine 389 contribute to the active site.

This sequence belongs to the thiolase-like superfamily. Chalcone/stilbene synthases family. In terms of tissue distribution, expressed in siliques.

It localises to the membrane. The enzyme catalyses a very-long-chain acyl-CoA + malonyl-CoA + H(+) = a very-long-chain 3-oxoacyl-CoA + CO2 + CoA. It functions in the pathway lipid metabolism; fatty acid biosynthesis. The sequence is that of Probable 3-ketoacyl-CoA synthase 14 from Arabidopsis thaliana (Mouse-ear cress).